A 900-amino-acid polypeptide reads, in one-letter code: Nuclear factor NF-kappa-B p100 subunit (900 aa).

Residues Ser-23 and Ser-161 each carry the phosphoserine modification. In terms of domain architecture, RHD spans 38 to 343; that stretch reads PYLVIVEQPK…EVQRKRRKAL (306 aa). The Nuclear localization signal motif lies at 337–341; the sequence is RKRRK. A GRR region spans residues 346–377; that stretch reads FSQPFGGGSHMGGGSGGAAGGYGGAGGGGSLG. A disordered region spans residues 404–435; the sequence is GAQMAATVPSRDSGEEAAEPSAPSRTPQCEPQ. Thr-429 is modified (phosphothreonine). ANK repeat units lie at residues 487-519, 526-555, 559-591, 599-628, 633-663, and 667-696; these read NGDTPLHLAIIHGQTSVIEQIVYVIHHAQDLGV, LHQTPLHLAVITGQTSVVSFLLRVGADPAL, HGDSAMHLALRAGAGAPELLRALLQSGAPAVPQ, EGLYPVHLAVRARSPECLDLLVDSGAEVEA, GGRTALHLATEMEELGLVTHLVTKLRANVNA, and AGNTPLHLAAGLGYPTLTRLLLKAGADIHA. The disordered stretch occupies residues 698-734; sequence NEEPLCPLPSPPTSDSDSDSEGPEKDTRSSFRGHTPL. Residues Ser-713, Ser-715, and Ser-717 each carry the phosphoserine modification. The stretch at 729–758 is one ANK 7 repeat; that stretch reads RGHTPLDLTCSTKVKTLLLNAAQNTMEPPL. Positions 764–851 constitute a Death domain; sequence AGPGLSLGDT…EGVRLLRGPE (88 aa). Position 812 is a phosphoserine (Ser-812). Residues 849–866 show a composition bias toward basic and acidic residues; the sequence is GPETRDKLPSTAEVKEDS. Residues 849–900 are disordered; it reads GPETRDKLPSTAEVKEDSAYGSQSVEQEAEKLGPPPEPPGGLCHGHPQPQVH. A Glycyl lysine isopeptide (Lys-Gly) (interchain with G-Cter in ubiquitin) cross-link involves residue Lys-855. Phosphoserine; by MAP3K14 is present on residues Ser-866 and Ser-870. Residues 888-900 show a composition bias toward low complexity; that stretch reads GGLCHGHPQPQVH.

In terms of assembly, component of the NF-kappa-B RelB-p52 complex. Homodimer; component of the NF-kappa-B p52-p52 complex. Component of the NF-kappa-B p65-p52 complex. Component of the NF-kappa-B p52-c-Rel complex. NFKB2/p52 interacts with NFKBIE. Component of a complex consisting of the NF-kappa-B p50-p50 homodimer and BCL3. Directly interacts with MEN1. Post-translationally, while translation occurs, the particular unfolded structure after the GRR repeat promotes the generation of p52 making it an acceptable substrate for the proteasome. This process is known as cotranslational processing. The processed form is active and the unprocessed form acts as an inhibitor (I kappa B-like), being able to form cytosolic complexes with NF-kappa B, trapping it in the cytoplasm. Complete folding of the region downstream of the GRR repeat precludes processing. Subsequent to MAP3K14-dependent serine phosphorylation, p100 polyubiquitination occurs then triggering its proteasome-dependent processing. In terms of processing, constitutive processing is tightly suppressed by its C-terminal processing inhibitory domain, named PID, which contains the death domain. Post-translationally, ubiquitinated by TRIM55; leading to processing by VCP and subsequent ubiquitin-dependent protein degradation by the proteasome.

The protein localises to the nucleus. It is found in the cytoplasm. Functionally, NF-kappa-B is a pleiotropic transcription factor present in almost all cell types and is the endpoint of a series of signal transduction events that are initiated by a vast array of stimuli related to many biological processes such as inflammation, immunity, differentiation, cell growth, tumorigenesis and apoptosis. NF-kappa-B is a homo- or heterodimeric complex formed by the Rel-like domain-containing proteins RELA/p65, RELB, NFKB1/p105, NFKB1/p50, REL and NFKB2/p52. The dimers bind at kappa-B sites in the DNA of their target genes and the individual dimers have distinct preferences for different kappa-B sites that they can bind with distinguishable affinity and specificity. Different dimer combinations act as transcriptional activators or repressors, respectively. NF-kappa-B is controlled by various mechanisms of post-translational modification and subcellular compartmentalization as well as by interactions with other cofactors or corepressors. NF-kappa-B complexes are held in the cytoplasm in an inactive state complexed with members of the NF-kappa-B inhibitor (I-kappa-B) family. In a conventional activation pathway, I-kappa-B is phosphorylated by I-kappa-B kinases (IKKs) in response to different activators, subsequently degraded thus liberating the active NF-kappa-B complex which translocates to the nucleus. In a non-canonical activation pathway, the MAP3K14-activated CHUK/IKKA homodimer phosphorylates NFKB2/p100 associated with RelB, inducing its proteolytic processing to NFKB2/p52 and the formation of NF-kappa-B RelB-p52 complexes. The NF-kappa-B heterodimeric RelB-p52 complex is a transcriptional activator. The NF-kappa-B p52-p52 homodimer is a transcriptional repressor. NFKB2 appears to have dual functions such as cytoplasmic retention of attached NF-kappa-B proteins by p100 and generation of p52 by a cotranslational processing. The proteasome-mediated process ensures the production of both p52 and p100 and preserves their independent function. p52 binds to the kappa-B consensus sequence 5'-GGRNNYYCC-3', located in the enhancer region of genes involved in immune response and acute phase reactions. p52 and p100 are respectively the minor and major form; the processing of p100 being relatively poor. Isoform p49 is a subunit of the NF-kappa-B protein complex, which stimulates the HIV enhancer in synergy with p65. In concert with RELB, regulates the circadian clock by repressing the transcriptional activator activity of the CLOCK-BMAL1 heterodimer. This Homo sapiens (Human) protein is Nuclear factor NF-kappa-B p100 subunit (NFKB2).